The sequence spans 208 residues: Uracil phosphoribosyltransferase (208 aa).

Residues arginine 78, arginine 103, and 130-138 contribute to the 5-phospho-alpha-D-ribose 1-diphosphate site; that span reads DPMFATGGT. Uracil is bound by residues isoleucine 193 and 198–200; that span reads GDA. Aspartate 199 is a 5-phospho-alpha-D-ribose 1-diphosphate binding site.

Belongs to the UPRTase family. It depends on Mg(2+) as a cofactor.

The enzyme catalyses UMP + diphosphate = 5-phospho-alpha-D-ribose 1-diphosphate + uracil. The protein operates within pyrimidine metabolism; UMP biosynthesis via salvage pathway; UMP from uracil: step 1/1. With respect to regulation, allosterically activated by GTP. Catalyzes the conversion of uracil and 5-phospho-alpha-D-ribose 1-diphosphate (PRPP) to UMP and diphosphate. The sequence is that of Uracil phosphoribosyltransferase from Campylobacter curvus (strain 525.92).